A 912-amino-acid polypeptide reads, in one-letter code: Phosphoenolpyruvate carboxylase (912 aa).

Residues histidine 138 and lysine 575 contribute to the active site.

This sequence belongs to the PEPCase type 1 family. The cofactor is Mg(2+).

The enzyme catalyses oxaloacetate + phosphate = phosphoenolpyruvate + hydrogencarbonate. Its function is as follows. Forms oxaloacetate, a four-carbon dicarboxylic acid source for the tricarboxylic acid cycle. This chain is Phosphoenolpyruvate carboxylase, found in Lactobacillus helveticus (strain DPC 4571).